The following is a 241-amino-acid chain: MLLNSLSTNFAALEVGQHLYWQIGNIRLHGQVFLTSWILLGSLLVFISLGTKKMENDPKGLQNLLEFLWDYIRDLARTQIGEKVYRDWMPFIGTLFLFVFVSNWGGALIPWRLIKLPSGELGAPTADINTTIALALLVSLSYFYAGLSNKGWRYFEYYVHPTPIMLPFKILEDFTKPLSLSFRLFGNILADELVVGVLVFLVPLVLPIPVMFLGLFTSAIQALIFATLAAYYIGEAVEEHH.

The next 5 membrane-spanning stretches (helical) occupy residues 30 to 50 (GQVF…ISLG), 91 to 111 (FIGT…LIPW), 128 to 148 (INTT…AGLS), 193 to 213 (LVVG…VMFL), and 214 to 234 (GLFT…YYIG).

Belongs to the ATPase A chain family. In terms of assembly, F-type ATPases have 2 components, CF(1) - the catalytic core - and CF(0) - the membrane proton channel. CF(1) has five subunits: alpha(3), beta(3), gamma(1), delta(1), epsilon(1). CF(0) has four main subunits: a, b, b' and c.

Its subcellular location is the cellular thylakoid membrane. Its function is as follows. Key component of the proton channel; it plays a direct role in the translocation of protons across the membrane. The sequence is that of ATP synthase subunit a from Prochlorococcus marinus (strain MIT 9515).